Consider the following 211-residue polypeptide: Small ribosomal subunit protein uS3 (211 aa).

The KH type-2 domain maps to 38-106; sequence LRKFIKKAFY…NIELNIIEVK (69 aa).

It belongs to the universal ribosomal protein uS3 family. Part of the 30S ribosomal subunit. Forms a tight complex with proteins S10 and S14.

Binds the lower part of the 30S subunit head. Binds mRNA in the 70S ribosome, positioning it for translation. This chain is Small ribosomal subunit protein uS3, found in Ehrlichia chaffeensis (strain ATCC CRL-10679 / Arkansas).